The primary structure comprises 130 residues: Small ribosomal subunit protein uS11c (130 aa).

The protein belongs to the universal ribosomal protein uS11 family. Part of the 30S ribosomal subunit.

It is found in the plastid. Its subcellular location is the chloroplast. This is Small ribosomal subunit protein uS11c from Chaetosphaeridium globosum (Charophycean green alga).